The following is a 392-amino-acid chain: MLLSLAQWLQSISPEFGSFRVFQYLTFRAVMAALTALLIGLLAGPFVIRRLISLKIGQPIREYAMQTHLSKSGTPTMGGVLILMSIGISTLLWFDLSNRFVWIVLLVTLGFGAIGWADDWRKVVLKDPEGMRSREKYLWQSLIGLVAALYLVFSISESSNLRVLELFFSWVQSGFDVDLPPKAGLLVPFVKEISYPLGVFGFVILTYLVIVGSSNAVNLTDGLDGLAIMPVVMVGSALGVFAYVTGSAVYSKYLFFPHIPGSGELLIFCSAMAGAGLAFLWFNTHPAQVFMGDVGALALGAALGTIAVIVRQEIVLAIMGGIFVVEALSVMMQVIWFKYTKKRYGEGRRLFKMAPLHHHFEKSGWKETQVVVRFWIITMLLCLVGLSTLKLR.

10 consecutive transmembrane segments (helical) span residues 29–49 (AVMA…FVIR), 76–96 (TMGG…WFDL), 100–120 (FVWI…ADDW), 137–157 (YLWQ…SISE), 193–213 (ISYP…IVGS), 225–245 (GLAI…AYVT), 262–282 (SGEL…FLWF), 289–309 (VFMG…IAVI), 314–334 (IVLA…MMQV), and 369–389 (QVVV…LSTL).

Belongs to the glycosyltransferase 4 family. MraY subfamily. Mg(2+) is required as a cofactor.

Its subcellular location is the cell inner membrane. It carries out the reaction UDP-N-acetyl-alpha-D-muramoyl-L-alanyl-gamma-D-glutamyl-meso-2,6-diaminopimeloyl-D-alanyl-D-alanine + di-trans,octa-cis-undecaprenyl phosphate = di-trans,octa-cis-undecaprenyl diphospho-N-acetyl-alpha-D-muramoyl-L-alanyl-D-glutamyl-meso-2,6-diaminopimeloyl-D-alanyl-D-alanine + UMP. The protein operates within cell wall biogenesis; peptidoglycan biosynthesis. Catalyzes the initial step of the lipid cycle reactions in the biosynthesis of the cell wall peptidoglycan: transfers peptidoglycan precursor phospho-MurNAc-pentapeptide from UDP-MurNAc-pentapeptide onto the lipid carrier undecaprenyl phosphate, yielding undecaprenyl-pyrophosphoryl-MurNAc-pentapeptide, known as lipid I. This is Phospho-N-acetylmuramoyl-pentapeptide-transferase from Polaromonas sp. (strain JS666 / ATCC BAA-500).